The chain runs to 166 residues: Small ribosomal subunit protein uS5 (166 aa).

In terms of domain architecture, S5 DRBM spans 11 to 74; that stretch reads FLEKLIAVNR…EKARRNMVDV (64 aa).

Belongs to the universal ribosomal protein uS5 family. Part of the 30S ribosomal subunit. Contacts proteins S4 and S8.

Functionally, with S4 and S12 plays an important role in translational accuracy. Its function is as follows. Located at the back of the 30S subunit body where it stabilizes the conformation of the head with respect to the body. This chain is Small ribosomal subunit protein uS5, found in Alteromonas mediterranea (strain DSM 17117 / CIP 110805 / LMG 28347 / Deep ecotype).